The primary structure comprises 424 residues: Serine--tRNA ligase (424 aa).

231–233 (TAE) lines the L-serine pocket. ATP is bound at residue 262-264 (RSE). Position 285 (Glu-285) interacts with L-serine. 349 to 352 (EISS) is a binding site for ATP. Ser-385 is a binding site for L-serine.

It belongs to the class-II aminoacyl-tRNA synthetase family. Type-1 seryl-tRNA synthetase subfamily. Homodimer. The tRNA molecule binds across the dimer.

The protein resides in the cytoplasm. The enzyme catalyses tRNA(Ser) + L-serine + ATP = L-seryl-tRNA(Ser) + AMP + diphosphate + H(+). It carries out the reaction tRNA(Sec) + L-serine + ATP = L-seryl-tRNA(Sec) + AMP + diphosphate + H(+). Its pathway is aminoacyl-tRNA biosynthesis; selenocysteinyl-tRNA(Sec) biosynthesis; L-seryl-tRNA(Sec) from L-serine and tRNA(Sec): step 1/1. Functionally, catalyzes the attachment of serine to tRNA(Ser). Is also able to aminoacylate tRNA(Sec) with serine, to form the misacylated tRNA L-seryl-tRNA(Sec), which will be further converted into selenocysteinyl-tRNA(Sec). This chain is Serine--tRNA ligase, found in Bacillus cereus (strain B4264).